The primary structure comprises 253 residues: Imidazole glycerol phosphate synthase subunit HisF (253 aa).

Catalysis depends on residues aspartate 11 and aspartate 130.

It belongs to the HisA/HisF family. Heterodimer of HisH and HisF.

Its subcellular location is the cytoplasm. The catalysed reaction is 5-[(5-phospho-1-deoxy-D-ribulos-1-ylimino)methylamino]-1-(5-phospho-beta-D-ribosyl)imidazole-4-carboxamide + L-glutamine = D-erythro-1-(imidazol-4-yl)glycerol 3-phosphate + 5-amino-1-(5-phospho-beta-D-ribosyl)imidazole-4-carboxamide + L-glutamate + H(+). Its pathway is amino-acid biosynthesis; L-histidine biosynthesis; L-histidine from 5-phospho-alpha-D-ribose 1-diphosphate: step 5/9. In terms of biological role, IGPS catalyzes the conversion of PRFAR and glutamine to IGP, AICAR and glutamate. The HisF subunit catalyzes the cyclization activity that produces IGP and AICAR from PRFAR using the ammonia provided by the HisH subunit. This Ruminiclostridium cellulolyticum (strain ATCC 35319 / DSM 5812 / JCM 6584 / H10) (Clostridium cellulolyticum) protein is Imidazole glycerol phosphate synthase subunit HisF.